Here is a 189-residue protein sequence, read N- to C-terminus: Class A basic helix-loop-helix protein 15 (189 aa).

Positions 1 to 12 (MKTKNRPPRRRA) are enriched in basic residues. 2 disordered regions span residues 1-85 (MKTK…ERER) and 167-189 (TEAQ…REGT). At T25 the chain carries Phosphothreonine. A compositionally biased stretch (basic and acidic residues) spans 68 to 85 (GRRDSSIQRRLESNERER). Positions 75-127 (QRRLESNERERQRMHKLNNAFQALREVIPHVRADKKLSKIETLTLAKNYIKSL) constitute a bHLH domain.

In terms of assembly, forms homodimers or heterodimers with TCF3 gene products E12 and E47. These dimers bind to the E-box site, however, heterodimer with MYOD1 does not bind target DNA. In terms of tissue distribution, expressed in brain, liver, spleen and skeletal muscle.

The protein localises to the nucleus. Functionally, plays a role in controlling the transcriptional activity of MYOD1, ensuring that expanding myoblast populations remain undifferentiated. Repression may occur through muscle-specific E-box occupancy by homodimers. May also negatively regulate bHLH-mediated transcription through an N-terminal repressor domain. Serves as a key regulator of acinar cell function, stability, and identity. Also required for normal organelle localization in exocrine cells and for mitochondrial calcium ion transport. May function as a unique regulator of gene expression in several different embryonic and postnatal cell lineages. Binds to the E-box consensus sequence 5'-CANNTG-3'. The protein is Class A basic helix-loop-helix protein 15 (BHLHA15) of Homo sapiens (Human).